Here is a 78-residue protein sequence, read N- to C-terminus: Acyl carrier protein (78 aa).

The Carrier domain occupies 2–77; the sequence is STIEERVKKI…AAIDFINANQ (76 aa). Ser-37 is subject to O-(pantetheine 4'-phosphoryl)serine.

This sequence belongs to the acyl carrier protein (ACP) family. 4'-phosphopantetheine is transferred from CoA to a specific serine of apo-ACP by AcpS. This modification is essential for activity because fatty acids are bound in thioester linkage to the sulfhydryl of the prosthetic group.

It is found in the cytoplasm. Its pathway is lipid metabolism; fatty acid biosynthesis. In terms of biological role, carrier of the growing fatty acid chain in fatty acid biosynthesis. This is Acyl carrier protein from Yersinia pseudotuberculosis serotype O:1b (strain IP 31758).